A 575-amino-acid chain; its full sequence is Transcription factor collier (575 aa).

Residues 79-82 (RKSN) form an interaction with DNA region. The segment at 167 to 186 (CRVLLTHEVMCSRCCDKKSC) adopts a C5-type zinc-finger fold. Interaction with DNA regions lie at residues 213-220 (NCLKNAGN) and 252-255 (NNSK). Residues 255–278 (KHGRRAKRLDTTEGTGNTSLSISG) are disordered. The segment covering 266-276 (TEGTGNTSLSI) has biased composition (polar residues). In terms of domain architecture, IPT/TIG spans 299 to 382 (PCIKAISPSE…KGSPGRFVYV (84 aa)). 2 disordered regions span residues 456 to 492 (GQWT…GSYG) and 546 to 575 (AATA…AAAV). Positions 479–492 (SSASTPHSSGGSYG) are enriched in low complexity. Over residues 546 to 557 (AATAHPHHHYPH) the composition is skewed to basic residues. Over residues 561-575 (PWHNPAVSAATAAAV) the composition is skewed to low complexity.

Belongs to the COE family. Its expression at the blastoderm stage is restricted to a single stripe of cells corresponding to part of the intercalary and mandibular segment primordia, possibly parasegment O.

It localises to the nucleus. In terms of biological role, may act as a 'second-level regulator' of head patterning. Required for establishment of the PS(-1)/PS0 parasegmental border and formation of the intercalary segment. Required for expression of the segment polarity genes hedgehog, engrailed and wingless, and the segment-identity genes CAP and collar in the intercalary segment. Required at the onset of the gastrulation for the correct formation of the mandibular segment. The chain is Transcription factor collier (kn) from Drosophila melanogaster (Fruit fly).